The chain runs to 189 residues: Crossover junction endodeoxyribonuclease RuvC (189 aa).

Active-site residues include aspartate 11, glutamate 71, and aspartate 143. The Mg(2+) site is built by aspartate 11, glutamate 71, and aspartate 143.

It belongs to the RuvC family. As to quaternary structure, homodimer which binds Holliday junction (HJ) DNA. The HJ becomes 2-fold symmetrical on binding to RuvC with unstacked arms; it has a different conformation from HJ DNA in complex with RuvA. In the full resolvosome a probable DNA-RuvA(4)-RuvB(12)-RuvC(2) complex forms which resolves the HJ. The cofactor is Mg(2+).

The protein localises to the cytoplasm. It carries out the reaction Endonucleolytic cleavage at a junction such as a reciprocal single-stranded crossover between two homologous DNA duplexes (Holliday junction).. In terms of biological role, the RuvA-RuvB-RuvC complex processes Holliday junction (HJ) DNA during genetic recombination and DNA repair. Endonuclease that resolves HJ intermediates. Cleaves cruciform DNA by making single-stranded nicks across the HJ at symmetrical positions within the homologous arms, yielding a 5'-phosphate and a 3'-hydroxyl group; requires a central core of homology in the junction. The consensus cleavage sequence is 5'-(A/T)TT(C/G)-3'. Cleavage occurs on the 3'-side of the TT dinucleotide at the point of strand exchange. HJ branch migration catalyzed by RuvA-RuvB allows RuvC to scan DNA until it finds its consensus sequence, where it cleaves and resolves the cruciform DNA. This Methylorubrum populi (strain ATCC BAA-705 / NCIMB 13946 / BJ001) (Methylobacterium populi) protein is Crossover junction endodeoxyribonuclease RuvC.